The following is a 531-amino-acid chain: HERV-H LTR-associating protein 1 (531 aa).

The N-terminal stretch at 1–29 (MLGFLSRGPSMKLCMGLACVLSLWNTVSG) is a signal peptide. Asn-79, Asn-143, and Asn-161 each carry an N-linked (GlcNAc...) asparagine glycan. Disordered stretches follow at residues 231-289 (GTAR…RPPE) and 340-362 (EKKP…GTEE). Composition is skewed to polar residues over residues 232-269 (TART…SSPW) and 349-362 (ETRS…GTEE).

The protein localises to the secreted. The chain is HERV-H LTR-associating protein 1 (HHLA1) from Homo sapiens (Human).